The following is a 131-amino-acid chain: Glycine cleavage system H protein (131 aa).

The Lipoyl-binding domain occupies 24 to 106; sequence RVTVGISDHA…YGEGWIFVVE (83 aa). Lys-65 carries the post-translational modification N6-lipoyllysine.

The protein belongs to the GcvH family. The glycine cleavage system is composed of four proteins: P, T, L and H. The cofactor is (R)-lipoate.

The glycine cleavage system catalyzes the degradation of glycine. The H protein shuttles the methylamine group of glycine from the P protein to the T protein. The sequence is that of Glycine cleavage system H protein from Xanthomonas axonopodis pv. citri (strain 306).